We begin with the raw amino-acid sequence, 503 residues long: Cobyric acid synthase (503 aa).

The GATase cobBQ-type domain occupies 251–450; it reads DLDIAVIRLP…IHGIFENAAF (200 aa). C331 serves as the catalytic Nucleophile. H442 is a catalytic residue.

Belongs to the CobB/CobQ family. CobQ subfamily.

It functions in the pathway cofactor biosynthesis; adenosylcobalamin biosynthesis. In terms of biological role, catalyzes amidations at positions B, D, E, and G on adenosylcobyrinic A,C-diamide. NH(2) groups are provided by glutamine, and one molecule of ATP is hydrogenolyzed for each amidation. This chain is Cobyric acid synthase, found in Dehalococcoides mccartyi (strain ATCC BAA-2100 / JCM 16839 / KCTC 5957 / BAV1).